The primary structure comprises 403 residues: Putative transport protein TP_0553 (403 aa).

A run of 8 helical transmembrane segments spans residues 10–30, 31–51, 92–112, 202–222, 243–263, 271–291, 293–313, and 350–370; these read ISLF…FVPY, LTVL…YRAL, AAVF…FIAI, LYFF…ALPL, KGLF…YGIF, LAML…CVWL, VGIS…LFVA, and TFGF…FTVI.

This sequence belongs to the autoinducer-2 exporter (AI-2E) (TC 2.A.86) family.

The protein localises to the cell membrane. The sequence is that of Putative transport protein TP_0553 from Treponema pallidum (strain Nichols).